Reading from the N-terminus, the 504-residue chain is MKEFKRYLELDRSQQHDFVYPLLFQEYIYVLAHDHGLNRSILLENADYDNKFSLLIVKRLITQMDQQNHLIFSPNDSNQNPFLGHNTNLYSQMILEGFAVVVEIPFSLRLISSLEGKETVKSHKLRSIHSIFPFLEDKFSRLNYVLDILIPHSIHLEILVQTLRYWVKDASSLHLLRFFLHEYRNWNTRITPKKSSFSFSKRNQRFFLFLYNFHVCESESIFVFLRNQSSHLRSISSGTFLERIYFYGKIEHFVKVFTKDFQDILWLFKDPFMHYVRYQGNSILASKGTSLLMNKWKYYLVNFWQCYFYMWCQPGRIQINQLSNHSLDFLGYLSSVRLNPSMVRSQMLENSFLIGNAIKKFDTIVPIIPLIGSLYKAKFCNVLGHPVSKPVWADLSDSDIIDRFGRIYRNLSHYHSGSLKKTSLYRIKYILRLSCARTLARKHKSTVRAFLKRLGSELLEEFFTEEEQVFYLTFQKTYSTSQGLSRGRIWYLDIICINDLANHE.

It belongs to the intron maturase 2 family. MatK subfamily.

It localises to the plastid. The protein resides in the chloroplast. Functionally, usually encoded in the trnK tRNA gene intron. Probably assists in splicing its own and other chloroplast group II introns. The polypeptide is Maturase K (Actinidia chinensis (Kiwi)).